Here is a 162-residue protein sequence, read N- to C-terminus: 2-C-methyl-D-erythritol 2,4-cyclodiphosphate synthase (162 aa).

The a divalent metal cation site is built by D10 and H12. 4-CDP-2-C-methyl-D-erythritol 2-phosphate is bound by residues 10–12 and 36–37; these read DVH and HS. H44 contacts a divalent metal cation. Residues 58–60, 63–67, and R144 contribute to the 4-CDP-2-C-methyl-D-erythritol 2-phosphate site; these read DIG and FSDTD.

Belongs to the IspF family. Homotrimer. Requires a divalent metal cation as cofactor.

The catalysed reaction is 4-CDP-2-C-methyl-D-erythritol 2-phosphate = 2-C-methyl-D-erythritol 2,4-cyclic diphosphate + CMP. Its pathway is isoprenoid biosynthesis; isopentenyl diphosphate biosynthesis via DXP pathway; isopentenyl diphosphate from 1-deoxy-D-xylulose 5-phosphate: step 4/6. In terms of biological role, involved in the biosynthesis of isopentenyl diphosphate (IPP) and dimethylallyl diphosphate (DMAPP), two major building blocks of isoprenoid compounds. Catalyzes the conversion of 4-diphosphocytidyl-2-C-methyl-D-erythritol 2-phosphate (CDP-ME2P) to 2-C-methyl-D-erythritol 2,4-cyclodiphosphate (ME-CPP) with a corresponding release of cytidine 5-monophosphate (CMP). This chain is 2-C-methyl-D-erythritol 2,4-cyclodiphosphate synthase, found in Burkholderia thailandensis (strain ATCC 700388 / DSM 13276 / CCUG 48851 / CIP 106301 / E264).